A 901-amino-acid polypeptide reads, in one-letter code: Protein translocase subunit SecA 1 (901 aa).

ATP-binding positions include Gln89, 107 to 111 (GEGKT), and Asp502. Residues 856-875 (AEAKASGDARPGFVEDDPST) are disordered. Zn(2+) is bound by residues Cys885, Cys887, Cys896, and His897.

It belongs to the SecA family. As to quaternary structure, monomer and homodimer. Part of the essential Sec protein translocation apparatus which comprises SecA, SecYEG and auxiliary proteins SecDF-YajC and YidC. It depends on Zn(2+) as a cofactor.

It is found in the cell inner membrane. It localises to the cytoplasm. It carries out the reaction ATP + H2O + cellular proteinSide 1 = ADP + phosphate + cellular proteinSide 2.. Functionally, part of the Sec protein translocase complex. Interacts with the SecYEG preprotein conducting channel. Has a central role in coupling the hydrolysis of ATP to the transfer of proteins into and across the cell membrane, serving both as a receptor for the preprotein-SecB complex and as an ATP-driven molecular motor driving the stepwise translocation of polypeptide chains across the membrane. This Ruegeria pomeroyi (strain ATCC 700808 / DSM 15171 / DSS-3) (Silicibacter pomeroyi) protein is Protein translocase subunit SecA 1.